A 608-amino-acid chain; its full sequence is Tyrosyl-DNA phosphodiesterase 1 (608 aa).

The tract at residues 1 to 101 is disordered; that stretch reads MSQEGDYGRW…SDDELQPEMP (101 aa). Position 61 is a phosphoserine (Ser-61). Residue Thr-147 is modified to Phosphothreonine. Ser-148 carries the post-translational modification Phosphoserine. The active-site Nucleophile is His-263. Residue Lys-265 participates in substrate binding. Positions 400–403 are interaction with DNA; that stretch reads SVGS. Residue His-493 is the Proton donor/acceptor of the active site. Lys-495 is a substrate binding site.

Belongs to the tyrosyl-DNA phosphodiesterase family. Monomer. Phosphorylated on serine and/or threonine residues, but not on tyrosine residues. As to expression, ubiquitously expressed. Similar expression throughout the central nervous system (whole brain, amygdala, caudate nucleus, cerebellum, cerebral cortex, frontal lobe, hippocampus, medulla oblongata, occipital lobe, putamen, substantia nigra, temporal lobe, thalamus, nucleus accumbens and spinal cord) and increased expression in testis and thymus.

The protein localises to the nucleus. It is found in the cytoplasm. Functionally, DNA repair enzyme that can remove a variety of covalent adducts from DNA through hydrolysis of a 3'-phosphodiester bond, giving rise to DNA with a free 3' phosphate. Catalyzes the hydrolysis of dead-end complexes between DNA and the topoisomerase I active site tyrosine residue. Hydrolyzes 3'-phosphoglycolates on protruding 3' ends on DNA double-strand breaks due to DNA damage by radiation and free radicals. Acts on blunt-ended double-strand DNA breaks and on single-stranded DNA. Has low 3'exonuclease activity and can remove a single nucleoside from the 3'end of DNA and RNA molecules with 3'hydroxyl groups. Has no exonuclease activity towards DNA or RNA with a 3'phosphate. This is Tyrosyl-DNA phosphodiesterase 1 (TDP1) from Homo sapiens (Human).